We begin with the raw amino-acid sequence, 393 residues long: 4-hydroxyphenylpyruvate dioxygenase (393 aa).

The residue at position 2 (threonine 2) is an N-acetylthreonine. 2 VOC domains span residues 18–152 and 180–338; these read HFHS…KMTF and IIDH…IFTK. Histidine 183 provides a ligand contact to Fe cation. Phosphoserine occurs at positions 211, 226, and 250. Fe cation contacts are provided by histidine 266 and glutamate 349.

It belongs to the 4HPPD family. As to quaternary structure, homodimer. It depends on Fe cation as a cofactor. In terms of tissue distribution, liver.

It is found in the cytoplasm. The protein localises to the endoplasmic reticulum membrane. Its subcellular location is the golgi apparatus membrane. It catalyses the reaction 3-(4-hydroxyphenyl)pyruvate + O2 = homogentisate + CO2. The protein operates within amino-acid degradation; L-phenylalanine degradation; acetoacetate and fumarate from L-phenylalanine: step 3/6. Functionally, catalyzes the conversion of 4-hydroxyphenylpyruvic acid to homogentisic acid, one of the steps in tyrosine catabolism. The protein is 4-hydroxyphenylpyruvate dioxygenase (HPD) of Sus scrofa (Pig).